The primary structure comprises 259 residues: UPF0246 protein PP_1289 (259 aa).

Belongs to the UPF0246 family.

In Pseudomonas putida (strain ATCC 47054 / DSM 6125 / CFBP 8728 / NCIMB 11950 / KT2440), this protein is UPF0246 protein PP_1289.